The chain runs to 353 residues: Farnesyl pyrophosphate synthase (353 aa).

Isopentenyl diphosphate is bound by residues lysine 57, arginine 60, and glutamine 96. At lysine 57 the chain carries N6-(2-hydroxyisobutyryl)lysine; alternate. Lysine 57 is modified (N6-acetyllysine; alternate). 2 residues coordinate Mg(2+): aspartate 103 and aspartate 107. Dimethylallyl diphosphate is bound at residue arginine 112. Residue arginine 113 coordinates isopentenyl diphosphate. Dimethylallyl diphosphate is bound by residues lysine 200, threonine 201, glutamine 240, lysine 257, and lysine 266.

The protein belongs to the FPP/GGPP synthase family. In terms of assembly, homodimer. Interacts with RSAD2. Mg(2+) serves as cofactor. In terms of tissue distribution, testis, liver, kidney, brain and adrenal gland.

The protein localises to the cytoplasm. The catalysed reaction is isopentenyl diphosphate + dimethylallyl diphosphate = (2E)-geranyl diphosphate + diphosphate. The enzyme catalyses isopentenyl diphosphate + (2E)-geranyl diphosphate = (2E,6E)-farnesyl diphosphate + diphosphate. It functions in the pathway isoprenoid biosynthesis; farnesyl diphosphate biosynthesis; farnesyl diphosphate from geranyl diphosphate and isopentenyl diphosphate: step 1/1. The protein operates within isoprenoid biosynthesis; geranyl diphosphate biosynthesis; geranyl diphosphate from dimethylallyl diphosphate and isopentenyl diphosphate: step 1/1. Its activity is regulated as follows. Inactivated by interferon-induced RSAD2. This inactivation may result of disruption of lipid rafts at the plasma membrane, and thus have an antiviral effect since many enveloped viruses need lipid rafts to bud efficiently out of the cell. Functionally, key enzyme in isoprenoid biosynthesis which catalyzes the formation of farnesyl diphosphate (FPP), a precursor for several classes of essential metabolites including sterols, dolichols, carotenoids, and ubiquinones. FPP also serves as substrate for protein farnesylation and geranylgeranylation. Catalyzes the sequential condensation of isopentenyl pyrophosphate with the allylic pyrophosphates, dimethylallyl pyrophosphate, and then with the resultant geranylpyrophosphate to the ultimate product farnesyl pyrophosphate. The protein is Farnesyl pyrophosphate synthase (Fdps) of Rattus norvegicus (Rat).